A 96-amino-acid polypeptide reads, in one-letter code: CRISPR-associated endoribonuclease Cas2 1 (96 aa).

D8 contributes to the Mg(2+) binding site.

This sequence belongs to the CRISPR-associated endoribonuclease Cas2 protein family. Homodimer, forms a heterotetramer with a Cas1 homodimer. The cofactor is Mg(2+).

In terms of biological role, CRISPR (clustered regularly interspaced short palindromic repeat), is an adaptive immune system that provides protection against mobile genetic elements (viruses, transposable elements and conjugative plasmids). CRISPR clusters contain sequences complementary to antecedent mobile elements and target invading nucleic acids. CRISPR clusters are transcribed and processed into CRISPR RNA (crRNA). Functions as a ssRNA-specific endoribonuclease. Involved in the integration of spacer DNA into the CRISPR cassette. The protein is CRISPR-associated endoribonuclease Cas2 1 of Moorella thermoacetica (strain ATCC 39073 / JCM 9320).